Reading from the N-terminus, the 148-residue chain is Ribonuclease pancreatic (148 aa).

The signal sequence occupies residues 1-25; the sequence is MGLEKSLMLFPLLVLVLGLVQPSLG. Substrate contacts are provided by Lys-32 and Arg-35. His-37 (proton acceptor) is an active-site residue. 4 disulfides stabilise this stretch: Cys-50–Cys-108, Cys-64–Cys-119, Cys-82–Cys-134, and Cys-89–Cys-96. Residues 65-69, Lys-90, and Arg-109 contribute to the substrate site; that span reads KPVNT. The Proton donor role is filled by His-143.

It belongs to the pancreatic ribonuclease family. As to quaternary structure, monomer. Interacts with and forms tight 1:1 complexes with RNH1. Dimerization of two such complexes may occur. Interaction with RNH1 inhibits this protein. In terms of tissue distribution, pancreas.

It is found in the secreted. The enzyme catalyses an [RNA] containing cytidine + H2O = an [RNA]-3'-cytidine-3'-phosphate + a 5'-hydroxy-ribonucleotide-3'-[RNA].. The catalysed reaction is an [RNA] containing uridine + H2O = an [RNA]-3'-uridine-3'-phosphate + a 5'-hydroxy-ribonucleotide-3'-[RNA].. Endonuclease that catalyzes the cleavage of RNA on the 3' side of pyrimidine nucleotides. Acts on single-stranded and double-stranded RNA. This chain is Ribonuclease pancreatic (RNASE1), found in Gerbilliscus gambianus (Gambian gerbil).